A 106-amino-acid polypeptide reads, in one-letter code: Vacuolar ATPase assembly integral membrane protein VMA21 homolog (106 aa).

Residues 1–26 (MSNKNKKSGGAGNGAAQKQTRQQSHD) are disordered. Over 1-32 (MSNKNKKSGGAGNGAAQKQTRQQSHDSQDYSS) the chain is Cytoplasmic. Residues 33–53 (FKIVLFYCMLIVFLPVVTFFL) form a helical membrane-spanning segment. Topologically, residues 54 to 69 (LKGFVLDRFFSLSEVK) are lumenal. The helical transmembrane segment at 70 to 90 (VNIASAVGAVVSLHIALGLYI) threads the bilayer. The Cytoplasmic segment spans residues 91–106 (YRAYFGATGSKAVKED).

The protein belongs to the VMA21 family.

It is found in the endoplasmic reticulum membrane. The protein resides in the endoplasmic reticulum-Golgi intermediate compartment membrane. The protein localises to the cytoplasmic vesicle. It localises to the COPII-coated vesicle membrane. In terms of biological role, required for the assembly of the V0 complex of the vacuolar ATPase (V-ATPase) in the endoplasmic reticulum. This Drosophila ananassae (Fruit fly) protein is Vacuolar ATPase assembly integral membrane protein VMA21 homolog.